Reading from the N-terminus, the 187-residue chain is Probable chorismate pyruvate-lyase (187 aa).

Substrate is bound by residues Arg80, Leu118, and Glu170.

The protein belongs to the UbiC family.

Its subcellular location is the cytoplasm. It carries out the reaction chorismate = 4-hydroxybenzoate + pyruvate. It participates in cofactor biosynthesis; ubiquinone biosynthesis. In terms of biological role, removes the pyruvyl group from chorismate, with concomitant aromatization of the ring, to provide 4-hydroxybenzoate (4HB) for the ubiquinone pathway. The polypeptide is Probable chorismate pyruvate-lyase (Pseudomonas fluorescens (strain ATCC BAA-477 / NRRL B-23932 / Pf-5)).